A 350-amino-acid chain; its full sequence is Glyceraldehyde-3-phosphate dehydrogenase (350 aa).

Residues 10-11 (RI), aspartate 36, arginine 82, and serine 125 each bind NAD(+). D-glyceraldehyde 3-phosphate is bound by residues 161 to 163 (SCT), threonine 193, 222 to 223 (TG), and arginine 245. Residue cysteine 162 is the Nucleophile of the active site. Residue asparagine 331 participates in NAD(+) binding.

The protein belongs to the glyceraldehyde-3-phosphate dehydrogenase family. In terms of assembly, homotetramer.

The protein localises to the cytoplasm. It catalyses the reaction D-glyceraldehyde 3-phosphate + phosphate + NAD(+) = (2R)-3-phospho-glyceroyl phosphate + NADH + H(+). Its pathway is carbohydrate degradation; glycolysis; pyruvate from D-glyceraldehyde 3-phosphate: step 1/5. In terms of biological role, catalyzes the oxidative phosphorylation of glyceraldehyde 3-phosphate (G3P) to 1,3-bisphosphoglycerate (BPG) using the cofactor NAD. The first reaction step involves the formation of a hemiacetal intermediate between G3P and a cysteine residue, and this hemiacetal intermediate is then oxidized to a thioester, with concomitant reduction of NAD to NADH. The reduced NADH is then exchanged with the second NAD, and the thioester is attacked by a nucleophilic inorganic phosphate to produce BPG. This is Glyceraldehyde-3-phosphate dehydrogenase (gap) from Treponema pallidum (strain Nichols).